A 349-amino-acid chain; its full sequence is Magnesium-protoporphyrin IX monomethyl ester [oxidative] cyclase (349 aa).

Residues 1-22 form a disordered region; the sequence is MTATASASSVSGSLGRNELPPH.

Belongs to the AcsF family. The cofactor is Fe cation.

It catalyses the reaction Mg-protoporphyrin IX 13-monomethyl ester + 3 NADPH + 3 O2 + 2 H(+) = 3,8-divinyl protochlorophyllide a + 3 NADP(+) + 5 H2O. Its pathway is porphyrin-containing compound metabolism; chlorophyll biosynthesis (light-independent). In terms of biological role, catalyzes the formation of the isocyclic ring in chlorophyll biosynthesis. Mediates the cyclase reaction, which results in the formation of divinylprotochlorophyllide (Pchlide) characteristic of all chlorophylls from magnesium-protoporphyrin IX 13-monomethyl ester (MgPMME). This chain is Magnesium-protoporphyrin IX monomethyl ester [oxidative] cyclase, found in Prochlorococcus marinus (strain MIT 9211).